Reading from the N-terminus, the 382-residue chain is Innexin-8 (382 aa).

Helical transmembrane passes span 29 to 49, 103 to 123, 187 to 207, and 270 to 290; these read LITA…TYVG, QWSS…KFLW, VIKI…AIFL, and IFLF…IAHF.

The protein belongs to the pannexin family.

It localises to the cell membrane. The protein resides in the cell junction. It is found in the gap junction. In terms of biological role, structural component of the gap junctions. The sequence is that of Innexin-8 (inx-8) from Caenorhabditis elegans.